The following is a 297-amino-acid chain: HTH-type transcriptional regulator ArgP (297 aa).

In terms of domain architecture, HTH lysR-type spans P4–T60. A DNA-binding region (H-T-H motif) is located at residues F21 to K40.

The protein belongs to the LysR transcriptional regulatory family. As to quaternary structure, homodimer.

In terms of biological role, controls the transcription of genes involved in arginine and lysine metabolism. The chain is HTH-type transcriptional regulator ArgP from Pectobacterium carotovorum subsp. carotovorum (strain PC1).